A 634-amino-acid polypeptide reads, in one-letter code: Glutathione S-transferase C-terminal domain-containing protein (634 aa).

Residues 131–333 form the GST C-terminal domain; it reads LGFKKTCLKA…QEVPKVKTAA (203 aa). Positions 189–233 are disordered; it reads RVHNDDKLRRQKLKQQKAAGSEPPSGKGKAKSKASAQKTPKDLAA. Low complexity predominate over residues 204 to 226; sequence QKAAGSEPPSGKGKAKSKASAQK.

It belongs to the GSTCD family.

It is found in the cytoplasm. This chain is Glutathione S-transferase C-terminal domain-containing protein (Gstcd), found in Mus musculus (Mouse).